The following is a 453-amino-acid chain: MDWKDVLRRRLASPNTDPKRKKSEQELKDEEMDLFTKYYSEWKGGRKNTNEFYKTIPRFYYRLPAEDEVLLQKLREESRAVFLQRKSRELLDNEELQNLWFLLDKHQIPPMIGEEAMINYENFLKVGEKAGPKCKQFFTAKVFAKLLHTDSYGRISIMQFFNYVMRKVWLHQTRIGLSLYDVAGQGYLRESDLENYILELIPTLPQLDGLEKSFYSFYVCTAVRKFFFFLDPLRTGKIKIQDILACSFLDDLLELRDEELSKESQETNWFSAPSALRVYGQYLNLDKDHNGMLSKEELSRYGTATMTNVFLDRVFQECLTYDGEMDYKTYLDFVLALENRKEPAALQYIFKLLDIENKGYLNVFSLNYFFRAIQELMKIHGQDPVSFQDVKDEIFDMVKPKDPLKISLQDLINSNQGDTVTTILIDLNGFWTYENREALVANDNENSADLDDT.

EF-hand domains follow at residues 273 to 308 and 341 to 376; these read PSAL…TMTN and KEPA…IQEL. Asp-286, Asp-288, Asn-290, Met-292, and Glu-297 together coordinate Ca(2+).

Interacts with MCM3AP/GANP, PPP5C, and the phosphatase 2A core enzyme composed of the PPP2CA catalytic subunit and the constant regulatory subunit PPP2R1A. Finds in a complex with ABCB1, TFPI2 and PPP2R3C; leading to the dephosphorylation of ABCB1. In terms of tissue distribution, expressed in all tissues tested including heart, brain, spleen, thymus, lung, liver, kidney and testis.

The protein localises to the nucleus. Its subcellular location is the cytoplasm. Its function is as follows. May regulate MCM3AP phosphorylation through phosphatase recruitment. May act as a negative regulator of ABCB1 expression and function through the dephosphorylation of ABCB1 by TFPI2/PPP2R3C complex. May play a role in the activation-induced cell death of B-cells. The chain is Serine/threonine-protein phosphatase 2A regulatory subunit B'' subunit gamma (Ppp2r3c) from Mus musculus (Mouse).